The chain runs to 309 residues: Zinc finger CCCH domain-containing protein 31 (309 aa).

Positions Met1 to Leu36 are disordered. 2 consecutive C3H1-type zinc fingers follow at residues Ser37–Pro65 and Ser103–Arg131. The interval Ala86–Thr106 is disordered. A KH domain is found at Ser175–Val239. Residues Ser249–Arg273 form a disordered region. Residues Pro251 to Ala265 are compositionally biased toward low complexity. The segment at Asn275–Asn302 adopts a C3H1-type 3 zinc-finger fold.

This chain is Zinc finger CCCH domain-containing protein 31, found in Oryza sativa subsp. japonica (Rice).